We begin with the raw amino-acid sequence, 277 residues long: 4-hydroxy-tetrahydrodipicolinate reductase (277 aa).

Position 9-14 (9-14 (GATGRM)) interacts with NAD(+). Lys37 contributes to the NADP(+) binding site. Residue 75-77 (GTS) participates in NAD(+) binding. His132 acts as the Proton donor/acceptor in catalysis. Lys136 acts as the Proton donor in catalysis. 142–143 (GT) is a binding site for (S)-2,3,4,5-tetrahydrodipicolinate. A disordered region spans residues 245–277 (SRERATQTAPTGAASGPVDDGGPSGQAATVTSA).

The protein belongs to the DapB family.

Its subcellular location is the cytoplasm. It catalyses the reaction (S)-2,3,4,5-tetrahydrodipicolinate + NAD(+) + H2O = (2S,4S)-4-hydroxy-2,3,4,5-tetrahydrodipicolinate + NADH + H(+). The catalysed reaction is (S)-2,3,4,5-tetrahydrodipicolinate + NADP(+) + H2O = (2S,4S)-4-hydroxy-2,3,4,5-tetrahydrodipicolinate + NADPH + H(+). It functions in the pathway amino-acid biosynthesis; L-lysine biosynthesis via DAP pathway; (S)-tetrahydrodipicolinate from L-aspartate: step 4/4. Its function is as follows. Catalyzes the conversion of 4-hydroxy-tetrahydrodipicolinate (HTPA) to tetrahydrodipicolinate. The polypeptide is 4-hydroxy-tetrahydrodipicolinate reductase (Clavibacter sepedonicus (Clavibacter michiganensis subsp. sepedonicus)).